The chain runs to 670 residues: Transcription factor vib-1 (670 aa).

The NDT80 DNA-binding region spans 106-341; the sequence is TEMVQDLRDD…RSPRNFQARK (236 aa). 2 stretches are compositionally biased toward polar residues: residues 394–438 and 553–568; these read FTSA…TTSM and LGNSSSDISPQSQHHP. Disordered regions lie at residues 394–457 and 496–670; these read FTSA…SYTA and SAPP…WNAT. Positions 592 to 605 are enriched in low complexity; sequence ASAPASAPTSAAPP. Residues 611-631 show a composition bias toward polar residues; the sequence is PSQSWTSTAGEGQTSSYTNGG.

The protein localises to the nucleus. It is found in the cytoplasm. Functionally, transcription factor that acts as a positive regulator of nonrepressible acid phosphatase activity. Is a major regulator of responses to nitrogen and carbon starvation and is essential for the expression of genes involved in vegetative incompatibility (like pin-c, het-6, and tol). Vegetative incompatibility is a non-self-recognition system ubiquitous in filamentous fungi which results in programmed cell death. This is Transcription factor vib-1 (vib-1) from Neurospora crassa (strain ATCC 24698 / 74-OR23-1A / CBS 708.71 / DSM 1257 / FGSC 987).